The primary structure comprises 268 residues: Tryptophan synthase alpha chain (268 aa).

Residues E49 and D60 each act as proton acceptor in the active site.

Belongs to the TrpA family. As to quaternary structure, tetramer of two alpha and two beta chains.

The enzyme catalyses (1S,2R)-1-C-(indol-3-yl)glycerol 3-phosphate + L-serine = D-glyceraldehyde 3-phosphate + L-tryptophan + H2O. It participates in amino-acid biosynthesis; L-tryptophan biosynthesis; L-tryptophan from chorismate: step 5/5. Functionally, the alpha subunit is responsible for the aldol cleavage of indoleglycerol phosphate to indole and glyceraldehyde 3-phosphate. This Erwinia tasmaniensis (strain DSM 17950 / CFBP 7177 / CIP 109463 / NCPPB 4357 / Et1/99) protein is Tryptophan synthase alpha chain.